Reading from the N-terminus, the 325-residue chain is DNA repair and recombination protein RadA (325 aa).

107-114 (GEFGSGKT) contributes to the ATP binding site.

The protein belongs to the eukaryotic RecA-like protein family.

Functionally, involved in DNA repair and in homologous recombination. Binds and assemble on single-stranded DNA to form a nucleoprotein filament. Hydrolyzes ATP in a ssDNA-dependent manner and promotes DNA strand exchange between homologous DNA molecules. The chain is DNA repair and recombination protein RadA from Methanosarcina barkeri (strain Fusaro / DSM 804).